Here is a 605-residue protein sequence, read N- to C-terminus: Sulfite reductase [NADPH] flavoprotein alpha-component (605 aa).

Residues 70–208 enclose the Flavodoxin-like domain; the sequence is LTIIYASQTG…PAAEWRVKAL (139 aa). FMN-binding positions include 76–81, 123–126, and 159–168; these read SQTGNA, STHG, and LGDSSYEFFC. The 215-residue stretch at 240 to 454 folds into the FAD-binding FR-type domain; it reads QNPYEATLLT…VEENNNFKLP (215 aa). FAD is bound by residues T328, G362, 392-395, 410-412, and 425-428; these read RLYS, TVG, and GGAS. NADP(+)-binding positions include 525–526, 531–535, and D567; these read SR and KVYVQ. Position 605 (Y605) interacts with FAD.

It belongs to the NADPH-dependent sulphite reductase flavoprotein subunit CysJ family. This sequence in the N-terminal section; belongs to the flavodoxin family. In the C-terminal section; belongs to the flavoprotein pyridine nucleotide cytochrome reductase family. In terms of assembly, alpha(8)-beta(8). The alpha component is a flavoprotein, the beta component is a hemoprotein. The cofactor is FAD. FMN is required as a cofactor.

It carries out the reaction hydrogen sulfide + 3 NADP(+) + 3 H2O = sulfite + 3 NADPH + 4 H(+). The protein operates within sulfur metabolism; hydrogen sulfide biosynthesis; hydrogen sulfide from sulfite (NADPH route): step 1/1. Component of the sulfite reductase complex that catalyzes the 6-electron reduction of sulfite to sulfide. This is one of several activities required for the biosynthesis of L-cysteine from sulfate. The flavoprotein component catalyzes the electron flow from NADPH -&gt; FAD -&gt; FMN to the hemoprotein component. In Photobacterium profundum (strain SS9), this protein is Sulfite reductase [NADPH] flavoprotein alpha-component.